Reading from the N-terminus, the 104-residue chain is NADH-quinone oxidoreductase subunit K (104 aa).

The next 3 membrane-spanning stretches (helical) occupy residues 4-24, 31-51, and 67-87; these read VPAS…LFGA, VIVL…LVAF, and LFTM…LIAL.

Belongs to the complex I subunit 4L family. NDH-1 is composed of 14 different subunits. Subunits NuoA, H, J, K, L, M, N constitute the membrane sector of the complex.

It localises to the cell membrane. It catalyses the reaction a quinone + NADH + 5 H(+)(in) = a quinol + NAD(+) + 4 H(+)(out). NDH-1 shuttles electrons from NADH, via FMN and iron-sulfur (Fe-S) centers, to quinones in the respiratory chain. The immediate electron acceptor for the enzyme in this species is believed to be a menaquinone. Couples the redox reaction to proton translocation (for every two electrons transferred, four hydrogen ions are translocated across the cytoplasmic membrane), and thus conserves the redox energy in a proton gradient. The polypeptide is NADH-quinone oxidoreductase subunit K (Bacillus cereus (strain AH820)).